We begin with the raw amino-acid sequence, 309 residues long: MTMRASLAIENFLEMMSAERGAAQNTLESYRRDLEAAAEELAAKGVNLAEAETGHIRMTLDTMAAQGFAPTSQARRLSALRQFFRFLYSEGFRQDDPTGILYAPKKQKPLPKIMSVENVGKLLDRAALEANEAAEPGERIKALRLHALLETLYATGLRVSELVGLPVTVARTDHRFLLVRGKGSKDRMVPLSRKARDALQKFLTLRDSLPGSDDNPWLFPAFSESGHLARQVFARELKGLAARAGLAASSVSPHVLRHAFASHLLQNGADLRTVQQLLGHADISTTQIYTHVLEERLHKLVSEHHPLAD.

The Core-binding (CB) domain occupies Met-3–Tyr-88. Positions Pro-109 to Ser-302 constitute a Tyr recombinase domain. Residues Arg-158, Lys-182, His-254, Arg-257, and His-280 contribute to the active site. Tyr-289 (O-(3'-phospho-DNA)-tyrosine intermediate) is an active-site residue.

Belongs to the 'phage' integrase family. XerD subfamily. As to quaternary structure, forms a cyclic heterotetrameric complex composed of two molecules of XerC and two molecules of XerD.

Its subcellular location is the cytoplasm. Its function is as follows. Site-specific tyrosine recombinase, which acts by catalyzing the cutting and rejoining of the recombining DNA molecules. The XerC-XerD complex is essential to convert dimers of the bacterial chromosome into monomers to permit their segregation at cell division. It also contributes to the segregational stability of plasmids. This is Tyrosine recombinase XerD from Brucella melitensis biotype 1 (strain ATCC 23456 / CCUG 17765 / NCTC 10094 / 16M).